Here is a 629-residue protein sequence, read N- to C-terminus: MNRQVCKTSGGGSLSFSGRSAVVSGSGGGGSSSRMSCVARSVAAGGGASGFRGGAGGFGSRSLYNLGGHKSISMSVAAGGSRAGGFGGGRSICGSGFGGGLGGGLGGGLGSGFGGGFGGGFGGAGAFGGAGGFGGAGGFGGPGGFGGPGGFPGGIQEVTVNQSLLQPLNVEIDPQIGQVRAQEREQIKTLNNKFASFIDKVRFLEQQNKVLETKWELLQRQGPNSVTGTNNLEPLFENRINYLRSYLDSIVGERGRLDSELRSMQDLVEDFKKKYEDEINKRTAAENEFVTLKKDVDAAYMNKVELQAKVDSLMDEINFLRTLYDAELSQMQSHVSDMSVVLSMDNNRSLDLDSIIAEVRAQYEDIAQRSRAEAEAWYQTKLGELQTTAGRHGDDLRSTKNEIAEINRMIQRLRNEIENVKKQNASLQTAIAEAEQRGELALKDANAKLQELQAALQQAKDDLARLLRDYQELMNVKLALDVEIATYRKLLEGEESRMSGECQSAVSISVVNSSSTTSAAAGGYGGGYGGGYGGGFGVGGGAGSGFGRGGGSGFGGGSGLGGGSGFGGGSGLGGGSGLGGGSIGFSVGSSGFGSGSGGRIGVSGGGFSSGSSSRGSSVKFSQSSQRYSR.

Residues 1-182 (MNRQVCKTSG…DPQIGQVRAQ (182 aa)) form a head region. 2 positions are modified to phosphoserine: Ser-13 and Ser-62. The tract at residues 183 to 218 (EREQIKTLNNKFASFIDKVRFLEQQNKVLETKWELL) is coil 1A. Positions 183–498 (EREQIKTLNN…KLLEGEESRM (316 aa)) constitute an IF rod domain. Positions 219 to 239 (QRQGPNSVTGTNNLEPLFENR) are linker 1. The coil 1B stretch occupies residues 240–331 (INYLRSYLDS…TLYDAELSQM (92 aa)). Lys-281 is modified (N6,N6-dimethyllysine). The linker 12 stretch occupies residues 332–355 (QSHVSDMSVVLSMDNNRSLDLDSI). Phosphoserine is present on Ser-349. The segment at 356 to 494 (IAEVRAQYED…ATYRKLLEGE (139 aa)) is coil 2. The tail stretch occupies residues 495 to 629 (ESRMSGECQS…FSQSSQRYSR (135 aa)). The disordered stretch occupies residues 603–629 (SGGGFSSGSSSRGSSVKFSQSSQRYSR). Residues 618–629 (VKFSQSSQRYSR) are compositionally biased toward polar residues.

Belongs to the intermediate filament family. In terms of assembly, heterotetramer of two type I and two type II keratins. Keratin-3 associates with keratin-12. As to expression, cornea specific. Expressed in the basal cells of corneal epithelium and stroma. Also expressed in esophageal epithelium.

This Oryctolagus cuniculus (Rabbit) protein is Keratin, type II cytoskeletal 3 (KRT3).